A 599-amino-acid polypeptide reads, in one-letter code: mRNA export factor MEX67 (599 aa).

Ser-2 carries the post-translational modification N-acetylserine. 2 LRR repeats span residues 163 to 184 (IVES…STLA) and 189 to 210 (NLKN…EVWK). Residues 224–262 (NPITTDKLYRTEMLRLFPKLVVLDNVIVRDEQKLQTVYS) form the LRRCT domain. Residues 280 to 467 (SSTDFATNFL…VIIASDLLTV (188 aa)) enclose the NTF2 domain. The segment at 408–439 (KPELESNKKTGKNNYQKNRRYNHGYNSTSNNK) is disordered. The 54-residue stretch at 546-599 (PVQLELLNKLHLETKLNAEYTFMLAEQSNWNYEVAIKGFQSSMNGIPREAFVQF) folds into the TAP-C domain.

This sequence belongs to the NXF family. As to quaternary structure, interacts with nucleoporin complex NUP84 and MTR2. Interacts with MIP6.

Its subcellular location is the nucleus. It is found in the cytoplasm. Involved in the export of mRNA from the nucleus to the cytoplasm. The protein is mRNA export factor MEX67 (MEX67) of Saccharomyces cerevisiae (strain ATCC 204508 / S288c) (Baker's yeast).